Consider the following 62-residue polypeptide: Photosystem II reaction center protein Z (62 aa).

A run of 2 helical transmembrane segments spans residues 8–28 (ALAA…VAYA) and 41–61 (FVGS…NFFV).

Belongs to the PsbZ family. In terms of assembly, PSII is composed of 1 copy each of membrane proteins PsbA, PsbB, PsbC, PsbD, PsbE, PsbF, PsbH, PsbI, PsbJ, PsbK, PsbL, PsbM, PsbT, PsbX, PsbY, PsbZ, Psb30/Ycf12, peripheral proteins PsbO, CyanoQ (PsbQ), PsbU, PsbV and a large number of cofactors. It forms dimeric complexes.

The protein resides in the cellular thylakoid membrane. Functionally, may control the interaction of photosystem II (PSII) cores with the light-harvesting antenna, regulates electron flow through the 2 photosystem reaction centers. PSII is a light-driven water plastoquinone oxidoreductase, using light energy to abstract electrons from H(2)O, generating a proton gradient subsequently used for ATP formation. This Picosynechococcus sp. (strain ATCC 27264 / PCC 7002 / PR-6) (Agmenellum quadruplicatum) protein is Photosystem II reaction center protein Z.